Consider the following 426-residue polypeptide: tRNA modification GTPase MnmE (426 aa).

(6S)-5-formyl-5,6,7,8-tetrahydrofolate is bound by residues arginine 20, glutamate 77, and methionine 117. One can recognise a TrmE-type G domain in the interval 213–350 (GFEVAILGAP…LLTDIEGVLS (138 aa)). Asparagine 223 contacts K(+). GTP contacts are provided by residues 223 to 228 (NAGKST), 242 to 248 (SDVPGTT), and 267 to 270 (DTAG). Serine 227 serves as a coordination point for Mg(2+). The K(+) site is built by serine 242, valine 244, and threonine 247. Residue threonine 248 participates in Mg(2+) binding. Lysine 426 is a binding site for (6S)-5-formyl-5,6,7,8-tetrahydrofolate.

It belongs to the TRAFAC class TrmE-Era-EngA-EngB-Septin-like GTPase superfamily. TrmE GTPase family. In terms of assembly, homodimer. Heterotetramer of two MnmE and two MnmG subunits. The cofactor is K(+).

It localises to the cytoplasm. In terms of biological role, exhibits a very high intrinsic GTPase hydrolysis rate. Involved in the addition of a carboxymethylaminomethyl (cmnm) group at the wobble position (U34) of certain tRNAs, forming tRNA-cmnm(5)s(2)U34. This chain is tRNA modification GTPase MnmE, found in Jannaschia sp. (strain CCS1).